The primary structure comprises 35 residues: MEALVYTFLLVSTLGIIFFAIFFREPPKVPNKKIK.

A helical membrane pass occupies residues 3-23; that stretch reads ALVYTFLLVSTLGIIFFAIFF.

The protein belongs to the PsbT family. As to quaternary structure, PSII is composed of 1 copy each of membrane proteins PsbA, PsbB, PsbC, PsbD, PsbE, PsbF, PsbH, PsbI, PsbJ, PsbK, PsbL, PsbM, PsbT, PsbY, PsbZ, Psb30/Ycf12, at least 3 peripheral proteins of the oxygen-evolving complex and a large number of cofactors. It forms dimeric complexes.

It is found in the plastid. Its subcellular location is the chloroplast thylakoid membrane. In terms of biological role, found at the monomer-monomer interface of the photosystem II (PS II) dimer, plays a role in assembly and dimerization of PSII. PSII is a light-driven water plastoquinone oxidoreductase, using light energy to abstract electrons from H(2)O, generating a proton gradient subsequently used for ATP formation. The sequence is that of Photosystem II reaction center protein T from Amborella trichopoda.